Reading from the N-terminus, the 277-residue chain is Cis-2,3-dihydrobiphenyl-2,3-diol dehydrogenase (277 aa).

9–33 is a binding site for NAD(+); it reads LITGGASGLGRALVDRFVAERAKVA. Ser-142 lines the substrate pocket. Tyr-155 functions as the Proton acceptor in the catalytic mechanism.

Belongs to the short-chain dehydrogenases/reductases (SDR) family. As to quaternary structure, homotetramer.

The catalysed reaction is (2R,3S)-3-phenylcyclohexa-3,5-diene-1,2-diol + NAD(+) = biphenyl-2,3-diol + NADH + H(+). Its pathway is xenobiotic degradation; biphenyl degradation; 2-hydroxy-2,4-pentadienoate and benzoate from biphenyl: step 2/4. The sequence is that of Cis-2,3-dihydrobiphenyl-2,3-diol dehydrogenase (bphB) from Pseudomonas putida (Arthrobacter siderocapsulatus).